Reading from the N-terminus, the 121-residue chain is Basic phospholipase A2 homolog blK-PLA2 (121 aa).

7 cysteine pairs are disulfide-bonded: C26–C115, C28–C44, C43–C95, C49–C121, C50–C88, C57–C81, and C75–C86. The important for membrane-damaging activities in eukaryotes and bacteria; heparin-binding stretch occupies residues 105–117; that stretch reads KKYRYHLKPFCKK.

Belongs to the phospholipase A2 family. Group II subfamily. K49 sub-subfamily. In terms of assembly, homodimer; non-covalently linked. Expressed by the venom gland.

Its subcellular location is the secreted. In terms of biological role, snake venom phospholipase A2 (PLA2) homolog that lacks enzymatic activity. Shows myotoxic and edema-inducing activities in vivo. A model of myotoxic mechanism has been proposed: an apo Lys49-PLA2 is activated by the entrance of a hydrophobic molecule (e.g. fatty acid) at the hydrophobic channel of the protein leading to a reorientation of a monomer. This reorientation causes a transition between 'inactive' to 'active' states, causing alignment of C-terminal and membrane-docking sites (MDoS) side-by-side and putting the membrane-disruption sites (MDiS) in the same plane, exposed to solvent and in a symmetric position for both monomers. The MDoS region stabilizes the toxin on membrane by the interaction of charged residues with phospholipid head groups. Subsequently, the MDiS region destabilizes the membrane with penetration of hydrophobic residues. This insertion causes a disorganization of the membrane, allowing an uncontrolled influx of ions (i.e. calcium and sodium), and eventually triggering irreversible intracellular alterations and cell death. This Bothrops leucurus (Whitetail lancehead) protein is Basic phospholipase A2 homolog blK-PLA2.